The sequence spans 272 residues: MKRSAFFISDGTGITAETLGQSLLAQFENITFAKFTRPYIDSVDKARAMVQQINLAAEKDGFRPIIFDTIVNQDIREILATSNGFMIDIFSTFLAPLEQELSEHSSYSVGKSHSIGHNSNYMERIEAVNFALDNDDGARTHYYDKADLILVGVSRCGKTPTCLYMAMQFGIRAANYPLTEDDMEHLTLPAALRAHSHKLFGLTIDPDRLTAIRNERKPNSRYSSYAQCEFEVREVENLFRRENIAHINSTHFSVEEISAKILVEKGVERRFK.

Residue 152–159 (GVSRCGKT) participates in ADP binding.

It belongs to the pyruvate, phosphate/water dikinase regulatory protein family. PSRP subfamily.

It carries out the reaction [pyruvate, water dikinase] + ADP = [pyruvate, water dikinase]-phosphate + AMP + H(+). It catalyses the reaction [pyruvate, water dikinase]-phosphate + phosphate + H(+) = [pyruvate, water dikinase] + diphosphate. Functionally, bifunctional serine/threonine kinase and phosphorylase involved in the regulation of the phosphoenolpyruvate synthase (PEPS) by catalyzing its phosphorylation/dephosphorylation. In Pseudomonas fluorescens (strain SBW25), this protein is Putative phosphoenolpyruvate synthase regulatory protein.